Consider the following 180-residue polypeptide: MNLAKIARKIVEYALEGKDYEIPDEIKEKLNYKAGAFTTIKTLDNQLRGCMGIPYPIYPLWQSLKYSALMAAFEDPRFPPLQKEELDNVKFEVTVLTPPRKLIVNNPLEYLEKIKIGKHGIIIKRGPYSGLLLPQVPIEEGWDAKEFLSYGCLKAGLPMDCWLDPKTEVYVFEGQIFEED.

The region spanning 1–180 (MNLAKIARKI…VFEGQIFEED (180 aa)) is the AMMECR1 domain.

The polypeptide is Protein NEQ441 (Nanoarchaeum equitans (strain Kin4-M)).